We begin with the raw amino-acid sequence, 325 residues long: 4-hydroxy-3-methylbut-2-enyl diphosphate reductase (325 aa).

A [4Fe-4S] cluster-binding site is contributed by C13. (2E)-4-hydroxy-3-methylbut-2-enyl diphosphate-binding residues include H42 and H76. The dimethylallyl diphosphate site is built by H42 and H76. Residues H42 and H76 each coordinate isopentenyl diphosphate. C98 contributes to the [4Fe-4S] cluster binding site. Residue H126 coordinates (2E)-4-hydroxy-3-methylbut-2-enyl diphosphate. H126 serves as a coordination point for dimethylallyl diphosphate. H126 contributes to the isopentenyl diphosphate binding site. E128 (proton donor) is an active-site residue. Residue T169 coordinates (2E)-4-hydroxy-3-methylbut-2-enyl diphosphate. C230 contacts [4Fe-4S] cluster. Residues S258, S259, N260, and S306 each coordinate (2E)-4-hydroxy-3-methylbut-2-enyl diphosphate. Dimethylallyl diphosphate contacts are provided by S258, S259, N260, and S306. The isopentenyl diphosphate site is built by S258, S259, N260, and S306.

The protein belongs to the IspH family. Requires [4Fe-4S] cluster as cofactor.

The catalysed reaction is isopentenyl diphosphate + 2 oxidized [2Fe-2S]-[ferredoxin] + H2O = (2E)-4-hydroxy-3-methylbut-2-enyl diphosphate + 2 reduced [2Fe-2S]-[ferredoxin] + 2 H(+). It carries out the reaction dimethylallyl diphosphate + 2 oxidized [2Fe-2S]-[ferredoxin] + H2O = (2E)-4-hydroxy-3-methylbut-2-enyl diphosphate + 2 reduced [2Fe-2S]-[ferredoxin] + 2 H(+). Its pathway is isoprenoid biosynthesis; dimethylallyl diphosphate biosynthesis; dimethylallyl diphosphate from (2E)-4-hydroxy-3-methylbutenyl diphosphate: step 1/1. The protein operates within isoprenoid biosynthesis; isopentenyl diphosphate biosynthesis via DXP pathway; isopentenyl diphosphate from 1-deoxy-D-xylulose 5-phosphate: step 6/6. Its function is as follows. Catalyzes the conversion of 1-hydroxy-2-methyl-2-(E)-butenyl 4-diphosphate (HMBPP) into a mixture of isopentenyl diphosphate (IPP) and dimethylallyl diphosphate (DMAPP). Acts in the terminal step of the DOXP/MEP pathway for isoprenoid precursor biosynthesis. This Prosthecochloris aestuarii (strain DSM 271 / SK 413) protein is 4-hydroxy-3-methylbut-2-enyl diphosphate reductase.